A 375-amino-acid chain; its full sequence is 23S rRNA (uracil(747)-C(5))-methyltransferase RlmC (375 aa).

4 residues coordinate [4Fe-4S] cluster: C3, C11, C14, and C87. S-adenosyl-L-methionine contacts are provided by Q212, F241, E262, and N307. Residue C334 is the Nucleophile of the active site.

Belongs to the class I-like SAM-binding methyltransferase superfamily. RNA M5U methyltransferase family. RlmC subfamily.

It carries out the reaction uridine(747) in 23S rRNA + S-adenosyl-L-methionine = 5-methyluridine(747) in 23S rRNA + S-adenosyl-L-homocysteine + H(+). In terms of biological role, catalyzes the formation of 5-methyl-uridine at position 747 (m5U747) in 23S rRNA. The protein is 23S rRNA (uracil(747)-C(5))-methyltransferase RlmC of Shigella flexneri serotype 5b (strain 8401).